The chain runs to 188 residues: dCTP deaminase (188 aa).

DCTP-binding positions include 111–116 (KSTYAR), 135–137 (TLE), glutamine 156, tyrosine 170, and glutamine 180. The active-site Proton donor/acceptor is the glutamate 137.

Belongs to the dCTP deaminase family. Homotrimer.

The enzyme catalyses dCTP + H2O + H(+) = dUTP + NH4(+). Its pathway is pyrimidine metabolism; dUMP biosynthesis; dUMP from dCTP (dUTP route): step 1/2. Functionally, catalyzes the deamination of dCTP to dUTP. This chain is dCTP deaminase, found in Cupriavidus pinatubonensis (strain JMP 134 / LMG 1197) (Cupriavidus necator (strain JMP 134)).